The chain runs to 90 residues: Large ribosomal subunit protein bL27 (90 aa).

Low complexity predominate over residues 1 to 13; the sequence is MATKKSGGSSSNG. Residues 1 to 20 form a disordered region; sequence MATKKSGGSSSNGRDSRGRR.

The protein belongs to the bacterial ribosomal protein bL27 family.

This Anaplasma marginale (strain Florida) protein is Large ribosomal subunit protein bL27.